Consider the following 1044-residue polypeptide: Outer dynein arm-docking complex subunit 2 (1044 aa).

Composition is skewed to basic and acidic residues over residues I317 to I338 and S379 to R401. Disordered regions lie at residues I317–A409 and I423–D446. HEAT repeat units follow at residues P448–T485, Q487–I527, N530–A568, A627–Y665, and A668–T706. ARM repeat units follow at residues E484–H523, P525–K564, G535–G577, Y622–S661, E663–E702, K746–Q785, P828–Q867, D871–K910, Q912–M951, G953–E992, and G1004–I1031. HEAT repeat units follow at residues M831 to K870, E874 to N914, A916 to N955, A958 to N996, and T999 to A1037.

In terms of assembly, component of the outer dynein arm-docking complex along with ODAD1, ODAD3, ODAD4 and CLXN. Interacts with CFAP61. As to expression, expressed in trachea multiciliated cells.

It is found in the cytoplasm. The protein resides in the cytoskeleton. It localises to the cilium axoneme. Its subcellular location is the cilium basal body. Functionally, component of the outer dynein arm-docking complex (ODA-DC) that mediates outer dynein arms (ODA) binding onto the doublet microtubule. Involved in mediating assembly of both ODAs and their axonemal docking complex onto ciliary microtubules. The polypeptide is Outer dynein arm-docking complex subunit 2 (ODAD2) (Bos taurus (Bovine)).